Reading from the N-terminus, the 465-residue chain is Phospholipase A1-II 5 (465 aa).

S233 (acyl-ester intermediate) is an active-site residue. Active-site charge relay system residues include S233, D297, and H336.

Belongs to the AB hydrolase superfamily. Lipase family.

It localises to the cytoplasm. Functionally, acylhydrolase that catalyzes the hydrolysis of phospholipids at the sn-1 position. This Oryza sativa subsp. japonica (Rice) protein is Phospholipase A1-II 5.